The chain runs to 344 residues: Arginine N-succinyltransferase (344 aa).

Residue leucine 125 coordinates succinyl-CoA. The active-site Proton donor is the histidine 229.

The protein belongs to the arginine N-succinyltransferase family.

It carries out the reaction succinyl-CoA + L-arginine = N(2)-succinyl-L-arginine + CoA + H(+). It participates in amino-acid degradation; L-arginine degradation via AST pathway; L-glutamate and succinate from L-arginine: step 1/5. Catalyzes the transfer of succinyl-CoA to arginine to produce N(2)-succinylarginine. The protein is Arginine N-succinyltransferase of Shigella flexneri.